We begin with the raw amino-acid sequence, 431 residues long: Serine--tRNA ligase (431 aa).

Residue 237–239 participates in L-serine binding; sequence TAE. 268 to 270 contributes to the ATP binding site; that stretch reads RSE. Residue E291 coordinates L-serine. ATP is bound at residue 355–358; the sequence is EISS. S390 serves as a coordination point for L-serine.

Belongs to the class-II aminoacyl-tRNA synthetase family. Type-1 seryl-tRNA synthetase subfamily. Homodimer. The tRNA molecule binds across the dimer.

The protein resides in the cytoplasm. It carries out the reaction tRNA(Ser) + L-serine + ATP = L-seryl-tRNA(Ser) + AMP + diphosphate + H(+). It catalyses the reaction tRNA(Sec) + L-serine + ATP = L-seryl-tRNA(Sec) + AMP + diphosphate + H(+). Its pathway is aminoacyl-tRNA biosynthesis; selenocysteinyl-tRNA(Sec) biosynthesis; L-seryl-tRNA(Sec) from L-serine and tRNA(Sec): step 1/1. In terms of biological role, catalyzes the attachment of serine to tRNA(Ser). Is also able to aminoacylate tRNA(Sec) with serine, to form the misacylated tRNA L-seryl-tRNA(Sec), which will be further converted into selenocysteinyl-tRNA(Sec). In Neisseria meningitidis serogroup A / serotype 4A (strain DSM 15465 / Z2491), this protein is Serine--tRNA ligase.